The chain runs to 550 residues: Centrosomal and chromosomal factor (550 aa).

3 coiled-coil regions span residues 20–44 (SALS…QQHH), 105–126 (VANS…QQQQ), and 239–274 (ATSA…QQAH). Disordered stretches follow at residues 21-145 (ALSA…KDYS), 208-320 (LSSG…HAAN), 361-380 (SHYA…RDAM), and 392-465 (SGKL…SASV). 3 stretches are compositionally biased toward low complexity: residues 24 to 71 (ALQQ…QQQQ), 81 to 136 (ANTS…NAAP), and 221 to 320 (AAVA…HAAN). 2 stretches are compositionally biased toward low complexity: residues 396 to 412 (QQSQ…QQHC) and 450 to 462 (SATP…SGGS).

Homodimer. Interacts with esc, Trl, E(z), scm and ph-p in vitro. Found in vivo in an esc-containing complex, which may be the Esc/E(z) complex. Also found in vivo in a Pc-containing complex that may be the PRC1 complex, but does not interact with Pc directly. Interacts with cyclin CycG.

The protein resides in the nucleus. It localises to the cytoplasm. Its subcellular location is the cytoskeleton. The protein localises to the microtubule organizing center. It is found in the centrosome. The protein resides in the chromosome. Functionally, essential protein required for proper condensation of mitotic chromosomes and progression through mitosis. Binds to specific polytene chromosome sites, many of which are shared with the posterior sex combs (Psc) protein. Involved in maintaining Abd-B repression outside its normal expression domain. This Drosophila melanogaster (Fruit fly) protein is Centrosomal and chromosomal factor (corto).